The sequence spans 587 residues: Probable pectinesterase/pectinesterase inhibitor 61 (587 aa).

The segment at Met-1–Leu-23 is disordered. Residues Gly-10–Pro-19 are compositionally biased toward polar residues. The chain crosses the membrane as a helical span at residues Ile-35–Ile-55. The segment at Arg-69 to Ile-223 is pectinesterase inhibitor 61. Positions Asp-273–Ser-571 are pectinesterase 61. 2 residues coordinate substrate: Thr-349 and Gln-379. The active-site Proton donor; for pectinesterase activity is Asp-402. A disulfide bridge connects residues Cys-416 and Cys-436. Asp-423 serves as the catalytic Nucleophile; for pectinesterase activity. Residues Arg-491 and Trp-493 each contribute to the substrate site.

The protein in the N-terminal section; belongs to the PMEI family. It in the C-terminal section; belongs to the pectinesterase family. As to expression, expressed in siliques, floral stems and rosettes leaves.

The protein localises to the membrane. It catalyses the reaction [(1-&gt;4)-alpha-D-galacturonosyl methyl ester](n) + n H2O = [(1-&gt;4)-alpha-D-galacturonosyl](n) + n methanol + n H(+). The protein operates within glycan metabolism; pectin degradation; 2-dehydro-3-deoxy-D-gluconate from pectin: step 1/5. Its function is as follows. Acts in the modification of cell walls via demethylesterification of cell wall pectin. This is Probable pectinesterase/pectinesterase inhibitor 61 (PME61) from Arabidopsis thaliana (Mouse-ear cress).